A 433-amino-acid chain; its full sequence is Origin recognition complex subunit 4 (433 aa).

At K7 the chain carries N6-methyllysine. 65–72 (GPRGSGKT) provides a ligand contact to ATP.

This sequence belongs to the ORC4 family. As to quaternary structure, component of ORC, a complex composed of at least 6 subunits: ORC1, ORC2, ORC3, ORC4, ORC5 and ORC6. ORC is regulated in a cell-cycle dependent manner. It is sequentially assembled at the exit from anaphase of mitosis and disassembled as cells enter S phase. Interacts with DBF4. Interacts with POLQ.

The protein localises to the nucleus. Binds histone H3 and H4 trimethylation marks H3K9me3, H3K27me3 and H4K20me3. Component of the origin recognition complex (ORC) that binds origins of replication. DNA-binding is ATP-dependent. The specific DNA sequences that define origins of replication have not been identified yet. ORC is required to assemble the pre-replication complex necessary to initiate DNA replication. This chain is Origin recognition complex subunit 4 (Orc4), found in Mus musculus (Mouse).